Consider the following 368-residue polypeptide: Peptidoglycan-recognition protein LA (368 aa).

At 1–127 (MFEENNSPTT…KSPSRRVTRN (127 aa)) the chain is on the cytoplasmic side. Disordered stretches follow at residues 21–46 (QRAS…GLPL) and 101–122 (INSN…SPSR). Composition is skewed to low complexity over residues 33–43 (TSAGSSTSSSG) and 102–113 (NSNNANGNGNAN). A helical membrane pass occupies residues 128–148 (TILLITLILLVLATGLIVLYV). Residues 149 to 368 (ELNRPKPELP…MKTESWDAKQ (220 aa)) are Extracellular-facing. Cysteine 221 and cysteine 227 form a disulfide bridge. Residues 233–320 (TIQDSAIAEK…DVDYKLVAQN (88 aa)) form the N-acetylmuramoyl-L-alanine amidase domain. Asparagine 273 and asparagine 320 each carry an N-linked (GlcNAc...) asparagine glycan.

It belongs to the N-acetylmuramoyl-L-alanine amidase 2 family. Expressed in uninduced hemocytes and mbn-2 cells.

Its subcellular location is the cell membrane. Peptidoglycan-recognition protein probably involved in innate immunity by binding to peptidoglycans (PGN) of bacteria and activating the immune response. The polypeptide is Peptidoglycan-recognition protein LA (PGRP-LA) (Drosophila melanogaster (Fruit fly)).